The sequence spans 366 residues: Glutamate 5-kinase (366 aa).

Lys-17 is a binding site for ATP. Residues Ser-57, Asp-144, and Asn-156 each coordinate substrate. Residues 176-177 (SD) and 216-222 (TGGMVSK) each bind ATP. The region spanning 278-356 (SGALTLDDGA…SDLPAEMRRP (79 aa)) is the PUA domain.

Belongs to the glutamate 5-kinase family.

Its subcellular location is the cytoplasm. It catalyses the reaction L-glutamate + ATP = L-glutamyl 5-phosphate + ADP. It functions in the pathway amino-acid biosynthesis; L-proline biosynthesis; L-glutamate 5-semialdehyde from L-glutamate: step 1/2. Catalyzes the transfer of a phosphate group to glutamate to form L-glutamate 5-phosphate. The protein is Glutamate 5-kinase of Mycolicibacterium vanbaalenii (strain DSM 7251 / JCM 13017 / BCRC 16820 / KCTC 9966 / NRRL B-24157 / PYR-1) (Mycobacterium vanbaalenii).